The following is an 842-amino-acid chain: ATP-binding cassette sub-family B member 6 (842 aa).

Residues 1–26 are Lumenal-facing; sequence MVTVGNYCEAEGPVGPAWMQDGLSPC. The segment at 1–205 is required for the lysosomal targeting; sequence MVTVGNYCEA…SGGLFVLGLW (205 aa). Positions 1-236 are required for ATPase activity; it reads MVTVGNYCEA…RSQVRSAAQQ (236 aa). Asn6 carries an N-linked (GlcNAc...) asparagine glycan. The cysteines at positions 8 and 26 are disulfide-linked. A helical transmembrane segment spans residues 27–47; sequence FFFTLVPSTRMALGTLALVLA. The Cytoplasmic portion of the chain corresponds to 48 to 72; that stretch reads LPCRRRERPAGADSLSWGAGPRISP. The helical transmembrane segment at 73-93 threads the bilayer; the sequence is YVLQLLLATLQAALPLAGLAG. Topologically, residues 94–106 are lumenal; the sequence is RVGTARGAPLPSY. The helical transmembrane segment at 107–127 threads the bilayer; that stretch reads LLLASVLESLAGACGLWLLVV. The Cytoplasmic segment spans residues 128–147; that stretch reads ERSQARQRLAMGIWIKFRHS. The helical transmembrane segment at 148-168 threads the bilayer; the sequence is PGLLLLWTVAFAAENLALVSW. Residues 169–185 lie on the Lumenal side of the membrane; it reads NSPQWWWARADLGQQVQ. A helical transmembrane segment spans residues 186 to 206; sequence FSLWVLRYVVSGGLFVLGLWA. Over 207–263 the chain is Cytoplasmic; the sequence is PGLRPQSYTLQVHEEDQDVERSQVRSAAQQSTWRDFGRKLRLLSGYLWPRGSPALQL. The helical transmembrane segment at 264-284 threads the bilayer; the sequence is VVLICLGLMGLERALNVLVPI. The 292-residue stretch at 265–556 folds into the ABC transmembrane type-1 domain; sequence VLICLGLMGL…FGTYYRMIQT (292 aa). Topologically, residues 285–291 are lumenal; sequence FYRNIVN. A helical membrane pass occupies residues 292-312; it reads LLTEKAPWNSLAWTVTSYVFL. Topologically, residues 313–375 are cytoplasmic; that stretch reads KFLQGGGTGS…TGEVLRIADR (63 aa). Residues 376-396 traverse the membrane as a helical segment; that stretch reads GTSSVTGLLSYLVFNVIPTLA. Asp397 is a topological domain (lumenal). The helical transmembrane segment at 398–418 threads the bilayer; that stretch reads IIIGIIYFSMFFNAWFGLIVF. At 419-499 the chain is on the cytoplasmic side; it reads LCMSLYLTLT…SSASLVLLNQ (81 aa). Residues 500–520 form a helical membrane-spanning segment; sequence TQNLVIGLGLLAGSLLCAYFV. The Lumenal segment spans residues 521–529; that stretch reads TEQKLQVGD. Residues 530–550 form a helical membrane-spanning segment; that stretch reads YVLFGTYIIQLYMPLNWFGTY. The Cytoplasmic segment spans residues 551 to 842; the sequence is YRMIQTNFID…EDTKPQTMER (292 aa). Positions 590–824 constitute an ABC transporter domain; it reads IEFENVHFSY…GGVYADMWQL (235 aa). ATP is bound by residues Tyr599 and 623–634; that span reads GPSGAGKSTILR.

The protein belongs to the ABC transporter superfamily. ABCB family. Heavy Metal importer (TC 3.A.1.210) subfamily. As to quaternary structure, homodimer. N-glycosylated. Widely expressed. High expression is detected in the retinal epithelium. Expressed in mature erythrocytes.

The protein localises to the cell membrane. Its subcellular location is the mitochondrion outer membrane. It is found in the endoplasmic reticulum membrane. The protein resides in the golgi apparatus membrane. It localises to the endosome membrane. The protein localises to the lysosome membrane. Its subcellular location is the late endosome membrane. It is found in the early endosome membrane. The protein resides in the secreted. It localises to the extracellular exosome. The protein localises to the mitochondrion. Its subcellular location is the endosome. It is found in the multivesicular body membrane. The protein resides in the melanosome membrane. It catalyses the reaction heme b(in) + ATP + H2O = heme b(out) + ADP + phosphate + H(+). It carries out the reaction coproporphyrin III(in) + ATP + H2O = coproporphyrin III(out) + ADP + phosphate + H(+). The enzyme catalyses pheophorbide a(in) + ATP + H2O = pheophorbide a(out) + ADP + phosphate + H(+). The catalysed reaction is coproporphyrinogen III(in) + ATP + H2O = coproporphyrinogen III(out) + ADP + phosphate + H(+). It catalyses the reaction protoporphyrin IX(in) + ATP + H2O = protoporphyrin IX(out) + ADP + phosphate + H(+). It carries out the reaction coproporphyrin I(in) + ATP + H2O = coproporphyrin I(out) + ADP + phosphate + H(+). The enzyme catalyses uroporphyrin I(in) + ATP + H2O = uroporphyrin I(out) + ADP + phosphate + H(+). The catalysed reaction is uroporphyrin III(in) + ATP + H2O = uroporphyrin III(out) + ADP + phosphate + H(+). ATPase activity is inhibited by MgATP with an IC(50) of 1.03 mM and up-regulated by coporphyrin III&gt; hemin &gt; protoporphyrin IX. ATPase activity for hemin is up-regulated by glutathione. The ATPase activity is impaired by increasing copper concentrations (0-300 uM). The ATPase activity is stimulated in presence of glutathione for increasing copper concentrations (0-300 uM). ATP-dependent transporter that catalyzes the transport of a broad-spectrum of porphyrins from the cytoplasm to the extracellular space through the plasma membrane or into the vesicle lumen. May also function as an ATP-dependent importer of porphyrins from the cytoplasm into the mitochondria, in turn may participate in the de novo heme biosynthesis regulation and in the coordination of heme and iron homeostasis during phenylhydrazine stress. May also play a key role in the early steps of melanogenesis producing PMEL amyloid fibrils. In vitro, it confers to cells a resistance to toxic metal such as arsenic and cadmium and against chemotherapeutics agent such as 5-fluorouracil, SN-38 and vincristin. In addition may play a role in the transition metal homeostasis. The sequence is that of ATP-binding cassette sub-family B member 6 from Homo sapiens (Human).